A 267-amino-acid polypeptide reads, in one-letter code: L-aspartate dehydrogenase (267 aa).

The NAD(+) site is built by Ala-124 and Asn-190. His-218 is a catalytic residue.

Belongs to the L-aspartate dehydrogenase family.

The enzyme catalyses L-aspartate + NADP(+) + H2O = oxaloacetate + NH4(+) + NADPH + H(+). It carries out the reaction L-aspartate + NAD(+) + H2O = oxaloacetate + NH4(+) + NADH + H(+). The protein operates within cofactor biosynthesis; NAD(+) biosynthesis; iminoaspartate from L-aspartate (dehydrogenase route): step 1/1. Its function is as follows. Specifically catalyzes the NAD or NADP-dependent dehydrogenation of L-aspartate to iminoaspartate. In Methanococcus maripaludis (strain C5 / ATCC BAA-1333), this protein is L-aspartate dehydrogenase.